The primary structure comprises 290 residues: Barley B recombinant-like protein C (290 aa).

Disordered regions lie at residues 60-90 (PHHH…YGMM) and 102-183 (QPEP…RKNI). The span at 104–116 (EPQPQLQHPPSPP) shows a compositional bias: pro residues. The span at 138–158 (PPKKRQQGRQPKVLRPKKPKK) shows a compositional bias: basic residues.

This sequence belongs to the BBR/BPC family.

Its subcellular location is the nucleus. Functionally, transcriptional regulator that specifically binds to GA-rich elements (GAGA-repeats) present in regulatory sequences of genes involved in developmental processes. The polypeptide is Barley B recombinant-like protein C (Oryza sativa subsp. japonica (Rice)).